The primary structure comprises 676 residues: Basic proline-rich protein (676 aa).

The signal sequence occupies residues 1-16; that stretch reads MLPILLSVALLALSSA. Ser28 and Ser30 each carry phosphoserine. The segment at 29 to 676 is disordered; it reads NSAEKFLRPP…PRPPPGPPPQ (648 aa). Composition is skewed to pro residues over residues 36–50, 71–424, and 442–676; these read RPPP…PPPE, GPAP…PPAD, and PPPA…PPPQ. Positions 409 to 457 are excised as a propeptide; it reads APPGARPPPPPPPPADEPQQGPAPSGDKPKKKPPPPAGPPPPGPPSPGP.

In terms of tissue distribution, acinar cells and secretory granules of the parotid gland.

It localises to the secreted. Functionally, the parotid hormone stimulates dentinal fluid transport in teeth. This chain is Basic proline-rich protein, found in Sus scrofa (Pig).